The primary structure comprises 1252 residues: Nephrin (1252 aa).

Positions 1–35 (MGAKRVTVRGARTSPIHRMSSLTPLLLMGMLTSGL) are cleaved as a signal peptide. Residues 36 to 1078 (AESPVPTSAP…PGPPRLPLLP (1043 aa)) lie on the Extracellular side of the membrane. 6 consecutive Ig-like C2-type domains span residues 39 to 144 (PVPT…VILS), 149 to 247 (PKVL…ASFT), 256 to 347 (PPVI…RSIT), 354 to 448 (PSAI…KSLT), 454 to 554 (PAQK…TQLV), and 558 to 649 (PPTN…ETVS). N-linked (GlcNAc...) asparagine glycosylation is present at Asn54. Intrachain disulfides connect Cys67-Cys125, Cys174-Cys231, and Cys279-Cys331. An N-linked (GlcNAc...) asparagine glycan is attached at Asn370. Cys375 and Cys431 are joined by a disulfide. Ser446 carries the post-translational modification Phosphoserine. A disulfide bond links Cys479 and Cys542. Asn561, Asn578, Asn591, and Asn722 each carry an N-linked (GlcNAc...) asparagine glycan. Cys581 and Cys637 form a disulfide bridge. Ig-like C2-type domains follow at residues 754–846 (PTIR…LVRL) and 852–953 (PQVD…VSIS). 2 disulfides stabilise this stretch: Cys775–Cys830 and Cys877–Cys934. In terms of domain architecture, Fibronectin type-III spans 957-1052 (PPLGLKVVSI…IQVSVTTPGP (96 aa)). A disordered region spans residues 1043 to 1067 (IQVSVTTPGPDQAPEDTDHQLPTEL). Residues 1079-1099 (VLFAVGGLLLLSNASCVGGLL) traverse the membrane as a helical segment. Residues 1100 to 1252 (WRRRLRRLAE…LPFELRGHLV (153 aa)) lie on the Cytoplasmic side of the membrane. A Phosphoserine modification is found at Ser1112. Over residues 1113 to 1127 (EKTEAGSEDRIRNEY) the composition is skewed to basic and acidic residues. The tract at residues 1113 to 1144 (EKTEAGSEDRIRNEYEESQWTGDRDTRSSTVS) is disordered. Phosphothreonine is present on Thr1115. The residue at position 1119 (Ser1119) is a Phosphoserine. The residue at position 1204 (Tyr1204) is a Phosphotyrosine; by FYN.

The protein belongs to the immunoglobulin superfamily. In terms of assembly, interacts with NPHS2 and with CD2AP (via C-terminal domain). Self-associates (via the Ig-like domains). Also interacts (via the Ig-like domains) with KIRREL1/NEPH1 and KIRREL2; the interaction with KIRREL1 is dependent on KIRREL1 glycosylation. Interacts with KIRREL3. Interacts with MAGI1 (via PDZ 2 and 3 domains) forming a tripartite complex with IGSF5/JAM4. Interacts with DDN; the interaction is direct. Forms a complex with ACTN4, CASK, IQGAP1, MAGI2, SPTAN1 and SPTBN1. Interacts with phosphatidylinositol 3-kinase regulatory subunit PIK3R1; the interaction is reduced by high glucose levels. Post-translationally, phosphorylated at Tyr-1204 by FYN, leading to the recruitment and activation of phospholipase C-gamma-1/PLCG1. Tyrosine phosphorylation is reduced by high glucose levels. Dephosphorylated by tensin TNS2 which leads to reduced binding of NPHN1 to PIK3R1. In terms of tissue distribution, strongly expressed in the podocytes of kidney glomeruli (at protein level) and at lower levels in the spleen.

The protein localises to the cell membrane. Its function is as follows. Seems to play a role in the development or function of the kidney glomerular filtration barrier. Regulates glomerular vascular permeability. May anchor the podocyte slit diaphragm to the actin cytoskeleton. Plays a role in skeletal muscle formation through regulation of myoblast fusion. This is Nephrin (Nphs1) from Rattus norvegicus (Rat).